A 236-amino-acid chain; its full sequence is MADLKASEGDLSDYYMRLKKIFSNETRLQSREASISKRSSRVHKNIISAKEAIERQERDFGKLQKVLLNRNQELERRFTLGEALAQQLEVTRQRNADMEAQLLRHTTEGRQRSNELMECMHSLKQATGTYINHEALPARLNGVSVVRADDGDIKLIPFSLDGNDADGLHTLWRSLHTRTDNNASKWRKLISDQEVAGASPVTPSGSERPKATSKHSNFMPTSIIEIDLTSPTNDAS.

A coiled-coil region spans residues 44–106 (KNIISAKEAI…DMEAQLLRHT (63 aa)). The segment at 194 to 217 (EVAGASPVTPSGSERPKATSKHSN) is disordered.

Belongs to the SPC25 family. As to quaternary structure, component of the Ndc80 complex, which is composed of Ndc80, Nuf2 and Spc25.

The protein localises to the nucleus. It localises to the chromosome. Its subcellular location is the centromere. It is found in the kinetochore. Acts as a component of the essential kinetochore-associated Ndc80 complex, which is required for chromosome segregation and spindle checkpoint activity during meiosis and mitosis. Required for kinetochore integrity and the organization of stable microtubule binding sites in the outer plate of the kinetochore. Participates in SAC signaling that responds specifically to disruptions in spindle microtubule dynamics. The NDC80 complex synergistically enhances the affinity of the SKA1 complex for microtubules and may allow the NDC80 complex to track depolymerizing microtubules. In Drosophila persimilis (Fruit fly), this protein is Kinetochore protein Spc25.